Consider the following 139-residue polypeptide: MRTLWIMAVLLVGVEGNLVQFETLIMKIAGRSGVWYYGSYGCYCGSGGQGRPQDASDRCCFVHDCCYGKVTDCDPKADVYTYSEENGVVVCGGDDPCKKQICEVRQGCGNLLPRHKDTYEHNILVFPAKTFAKKESEPC.

Positions 1–16 are cleaved as a signal peptide; sequence MRTLWIMAVLLVGVEG. A disulfide bridge links cysteine 44 with cysteine 60. Glycine 45 and glycine 47 together coordinate Ca(2+). Histidine 63 is a catalytic residue. Aspartate 64 provides a ligand contact to Ca(2+). Disulfide bonds link cysteine 65–cysteine 139, cysteine 73–cysteine 97, and cysteine 91–cysteine 102.

It belongs to the phospholipase A2 family. Group II subfamily. D49 sub-subfamily. The cofactor is Ca(2+). In terms of tissue distribution, expressed by the venom gland.

The protein localises to the secreted. The enzyme catalyses a 1,2-diacyl-sn-glycero-3-phosphocholine + H2O = a 1-acyl-sn-glycero-3-phosphocholine + a fatty acid + H(+). Its function is as follows. PLA2 catalyzes the calcium-dependent hydrolysis of the 2-acyl groups in 3-sn-phosphoglycerides. This is Acidic phospholipase A2 BpPLA2-TXI from Bothrops pauloensis (Neuwied's lancehead).